We begin with the raw amino-acid sequence, 783 residues long: Protein transport protein SEC23 B (783 aa).

Zn(2+)-binding residues include cysteine 59, cysteine 62, cysteine 81, and cysteine 84. Positions 59–84 are zinc finger-like; the sequence is CRICTAALNPFARVDFLAKIWICPIC.

The protein belongs to the SEC23/SEC24 family. SEC23 subfamily. In terms of assembly, component of the coat protein complex II (COPII), composed of at least five proteins: the Sec23/24 complex, the Sec13/31 complex and Sar1. Interacts with SEC24A.

The protein localises to the cytoplasmic vesicle. It localises to the COPII-coated vesicle membrane. It is found in the endoplasmic reticulum membrane. The protein resides in the membrane. Its function is as follows. Component of the coat protein complex II (COPII) which promotes the formation of transport vesicles from the endoplasmic reticulum (ER). The coat has two main functions, the physical deformation of the endoplasmic reticulum membrane into vesicles and the selection of cargo molecules. In Arabidopsis thaliana (Mouse-ear cress), this protein is Protein transport protein SEC23 B.